The following is a 256-amino-acid chain: UPF0246 protein SPO0106 (256 aa).

This sequence belongs to the UPF0246 family.

The sequence is that of UPF0246 protein SPO0106 from Ruegeria pomeroyi (strain ATCC 700808 / DSM 15171 / DSS-3) (Silicibacter pomeroyi).